We begin with the raw amino-acid sequence, 361 residues long: Phospho-N-acetylmuramoyl-pentapeptide-transferase (361 aa).

The next 10 membrane-spanning stretches (helical) occupy residues 28–48 (LSMF…IKFF), 70–90 (IGTP…GILL), 94–114 (LSNY…LLGA), 129–149 (VSFK…IYGL), 169–189 (LIIN…VGSS), 205–225 (PVIL…NIVF), 237–257 (MGEV…FLWF), 264–284 (IFMG…IGII), 289–309 (IVLA…IIQV), and 338–358 (TVVI…LATL).

The protein belongs to the glycosyltransferase 4 family. MraY subfamily. Requires Mg(2+) as cofactor.

It localises to the cell inner membrane. The enzyme catalyses UDP-N-acetyl-alpha-D-muramoyl-L-alanyl-gamma-D-glutamyl-meso-2,6-diaminopimeloyl-D-alanyl-D-alanine + di-trans,octa-cis-undecaprenyl phosphate = di-trans,octa-cis-undecaprenyl diphospho-N-acetyl-alpha-D-muramoyl-L-alanyl-D-glutamyl-meso-2,6-diaminopimeloyl-D-alanyl-D-alanine + UMP. It functions in the pathway cell wall biogenesis; peptidoglycan biosynthesis. In terms of biological role, catalyzes the initial step of the lipid cycle reactions in the biosynthesis of the cell wall peptidoglycan: transfers peptidoglycan precursor phospho-MurNAc-pentapeptide from UDP-MurNAc-pentapeptide onto the lipid carrier undecaprenyl phosphate, yielding undecaprenyl-pyrophosphoryl-MurNAc-pentapeptide, known as lipid I. The chain is Phospho-N-acetylmuramoyl-pentapeptide-transferase from Pelagibacter ubique (strain HTCC1062).